The chain runs to 385 residues: UPF0284 protein P9215_05181 (385 aa).

The protein belongs to the UPF0284 family.

This is UPF0284 protein P9215_05181 from Prochlorococcus marinus (strain MIT 9215).